Consider the following 264-residue polypeptide: S-adenosylmethionine decarboxylase proenzyme (264 aa).

The active-site Schiff-base intermediate with substrate; via pyruvic acid is serine 112. Serine 112 is subject to Pyruvic acid (Ser); by autocatalysis. Histidine 117 functions as the Proton acceptor; for processing activity in the catalytic mechanism. Cysteine 140 acts as the Proton donor; for catalytic activity in catalysis.

The protein belongs to the prokaryotic AdoMetDC family. Type 2 subfamily. In terms of assembly, heterooctamer of four alpha and four beta chains arranged as a tetramer of alpha/beta heterodimers. Pyruvate is required as a cofactor. In terms of processing, is synthesized initially as an inactive proenzyme. Formation of the active enzyme involves a self-maturation process in which the active site pyruvoyl group is generated from an internal serine residue via an autocatalytic post-translational modification. Two non-identical subunits are generated from the proenzyme in this reaction, and the pyruvate is formed at the N-terminus of the alpha chain, which is derived from the carboxyl end of the proenzyme. The post-translation cleavage follows an unusual pathway, termed non-hydrolytic serinolysis, in which the side chain hydroxyl group of the serine supplies its oxygen atom to form the C-terminus of the beta chain, while the remainder of the serine residue undergoes an oxidative deamination to produce ammonia and the pyruvoyl group blocking the N-terminus of the alpha chain.

It catalyses the reaction S-adenosyl-L-methionine + H(+) = S-adenosyl 3-(methylsulfanyl)propylamine + CO2. It participates in amine and polyamine biosynthesis; S-adenosylmethioninamine biosynthesis; S-adenosylmethioninamine from S-adenosyl-L-methionine: step 1/1. Its function is as follows. Catalyzes the decarboxylation of S-adenosylmethionine to S-adenosylmethioninamine (dcAdoMet), the propylamine donor required for the synthesis of the polyamines spermine and spermidine from the diamine putrescine. The protein is S-adenosylmethionine decarboxylase proenzyme of Shigella dysenteriae serotype 1 (strain Sd197).